A 751-amino-acid polypeptide reads, in one-letter code: Fusarisetin A cluster transcription factor fsa6 (751 aa).

The interval 1–35 (MADQAQDVRPTEWGPGKTPQGRARLPSSRPREKPQ) is disordered. Residues 38 to 66 (CNLCRRRKLRCDRQRPCSSCAQRELGLSC) constitute a DNA-binding region (zn(2)-C6 fungal-type). Positions 107 to 116 (NVNAQDQVGA) are enriched in polar residues. Residues 107-153 (NVNAQDQVGATPSPRGQPRGPDYPTPAAVHAPSTNEEPVSAAVSPAD) are disordered.

It localises to the nucleus. In terms of biological role, transcription factor that regulates the expression of the gene cluster that mediates the biosynthesis of fusarisetin A. The polypeptide is Fusarisetin A cluster transcription factor fsa6 (Fusarium sp. (strain FN080326)).